The following is a 199-amino-acid chain: uncharacterized protein (199 aa).

The N-terminal stretch at methionine 1–alanine 23 is a signal peptide. N-linked (GlcNAc...) asparagine glycosylation is found at asparagine 19 and asparagine 26. Topologically, residues serine 24 to threonine 60 are extracellular. A helical membrane pass occupies residues leucine 61–phenylalanine 81. The Cytoplasmic portion of the chain corresponds to histidine 82–serine 199. Residues methionine 93–glutamate 190 are disordered. Basic and acidic residues-rich tracts occupy residues arginine 95 to serine 106 and histidine 124 to arginine 135. Positions serine 147–proline 163 are enriched in low complexity. The span at cysteine 164–glutamine 176 shows a compositional bias: pro residues.

The protein localises to the membrane. This is an uncharacterized protein from Mus musculus (Mouse).